We begin with the raw amino-acid sequence, 84 residues long: Large ribosomal subunit protein bL27 (84 aa).

A disordered region spans residues 1–22 (MAHKKGGGSTKNGRDSNPKYLG).

The protein belongs to the bacterial ribosomal protein bL27 family.

The polypeptide is Large ribosomal subunit protein bL27 (Prosthecochloris aestuarii (strain DSM 271 / SK 413)).